A 176-amino-acid chain; its full sequence is Ribosome maturation factor RimM (176 aa).

The region spanning 96–176 is the PRC barrel domain; that stretch reads PADEFYWRDL…QILVDWDPDF (81 aa).

This sequence belongs to the RimM family. In terms of assembly, binds ribosomal protein uS19.

The protein localises to the cytoplasm. An accessory protein needed during the final step in the assembly of 30S ribosomal subunit, possibly for assembly of the head region. Essential for efficient processing of 16S rRNA. May be needed both before and after RbfA during the maturation of 16S rRNA. It has affinity for free ribosomal 30S subunits but not for 70S ribosomes. The protein is Ribosome maturation factor RimM of Shewanella baltica (strain OS223).